Consider the following 639-residue polypeptide: 1-deoxy-D-xylulose-5-phosphate synthase 1 (639 aa).

Residues His-79 and Ala-120–Ser-122 contribute to the thiamine diphosphate site. Asp-155 contributes to the Mg(2+) binding site. Residues Gly-156 to Ala-157, Asn-184, Tyr-293, and Glu-373 contribute to the thiamine diphosphate site. Asn-184 provides a ligand contact to Mg(2+).

The protein belongs to the transketolase family. DXPS subfamily. As to quaternary structure, homodimer. Mg(2+) is required as a cofactor. It depends on thiamine diphosphate as a cofactor.

The catalysed reaction is D-glyceraldehyde 3-phosphate + pyruvate + H(+) = 1-deoxy-D-xylulose 5-phosphate + CO2. It functions in the pathway metabolic intermediate biosynthesis; 1-deoxy-D-xylulose 5-phosphate biosynthesis; 1-deoxy-D-xylulose 5-phosphate from D-glyceraldehyde 3-phosphate and pyruvate: step 1/1. Its function is as follows. Catalyzes the acyloin condensation reaction between C atoms 2 and 3 of pyruvate and glyceraldehyde 3-phosphate to yield 1-deoxy-D-xylulose-5-phosphate (DXP). The polypeptide is 1-deoxy-D-xylulose-5-phosphate synthase 1 (Jannaschia sp. (strain CCS1)).